A 186-amino-acid chain; its full sequence is Nascent polypeptide-associated complex subunit beta (186 aa).

The region spanning 65-130 (GADDKKLQTT…GEEKELTELV (66 aa)) is the NAC-A/B domain. Residues 153–186 (QNMQKQAGAEGKKDEDEDDIPDLVEGENFESNVE) form a disordered region. Residues 167-186 (EDEDDIPDLVEGENFESNVE) show a composition bias toward acidic residues.

It belongs to the NAC-beta family. Part of the nascent polypeptide-associated complex (NAC), consisting of egd2 and egd1. NAC associates with ribosomes via egd1.

The protein resides in the cytoplasm. Its subcellular location is the nucleus. Functionally, component of the nascent polypeptide-associated complex (NAC), a dynamic component of the ribosomal exit tunnel, protecting the emerging polypeptides from interaction with other cytoplasmic proteins to ensure appropriate nascent protein targeting. The NAC complex also promotes mitochondrial protein import by enhancing productive ribosome interactions with the outer mitochondrial membrane and blocks the inappropriate interaction of ribosomes translating non-secretory nascent polypeptides with translocation sites in the membrane of the endoplasmic reticulum. EGD1 may act as a transcription factor that exert a negative effect on the expression of several genes that are transcribed by RNA polymerase II. The sequence is that of Nascent polypeptide-associated complex subunit beta (egd1) from Aspergillus fumigatus (strain ATCC MYA-4609 / CBS 101355 / FGSC A1100 / Af293) (Neosartorya fumigata).